Reading from the N-terminus, the 328-residue chain is Phenylalanine--tRNA ligase alpha subunit (328 aa).

Mg(2+) is bound at residue glutamate 245.

It belongs to the class-II aminoacyl-tRNA synthetase family. Phe-tRNA synthetase alpha subunit type 1 subfamily. As to quaternary structure, tetramer of two alpha and two beta subunits. Mg(2+) serves as cofactor.

The protein resides in the cytoplasm. It catalyses the reaction tRNA(Phe) + L-phenylalanine + ATP = L-phenylalanyl-tRNA(Phe) + AMP + diphosphate + H(+). In Helicobacter pylori (strain G27), this protein is Phenylalanine--tRNA ligase alpha subunit.